The chain runs to 386 residues: Protein phosphatase methylesterase 1 (386 aa).

The tract at residues 20 to 48 is disordered; that stretch reads ILEKLKGGQEPNSNEEGSDSIGDLPSLKN. Active-site residues include Ser194, Asp222, and His348.

The protein belongs to the AB hydrolase superfamily.

The enzyme catalyses [phosphatase 2A protein]-C-terminal L-leucine methyl ester + H2O = [phosphatase 2A protein]-C-terminal L-leucine + methanol + H(+). Its function is as follows. Demethylates proteins that have been reversibly carboxymethylated. Demethylates the phosphatase PP2A catalytic subunit. The polypeptide is Protein phosphatase methylesterase 1 (PPE1) (Candida glabrata (strain ATCC 2001 / BCRC 20586 / JCM 3761 / NBRC 0622 / NRRL Y-65 / CBS 138) (Yeast)).